Consider the following 192-residue polypeptide: Apoptosis regulator BAX (192 aa).

The residue at position 1 (Met1) is an N-acetylmethionine. A BH3 motif is present at residues 59–73 (LSECLKRIGDELDSN). The BH1 signature appears at 98–118 (EMFSDGNFNWGRVVALFYFAS). A Glycyl lysine isopeptide (Lys-Gly) (interchain with G-Cter in ubiquitin) cross-link involves residue Lys128. Residues 150 to 165 (GWIQDQGGWDGLLSYF) carry the BH2 motif. Residues 172 to 192 (TVTIFVAGVLTASLTIWKKMG) form a helical membrane-spanning segment. Lys190 participates in a covalent cross-link: Glycyl lysine isopeptide (Lys-Gly) (interchain with G-Cter in ubiquitin).

Belongs to the Bcl-2 family. Homodimer. Forms higher oligomers under stress conditions. Forms heterooligomers with BAK. Interacts with BCL2L11. Interaction with BCL2L11 promotes BAX oligomerization and association with mitochondrial membranes, with subsequent release of cytochrome c. Forms heterodimers with BCL2, BCL2L1 isoform Bcl-X(L), BCL2L2, MCL1 and A1. Interacts with SH3GLB1. Interacts with SFN and YWHAZ; the interaction occurs in the cytoplasm. Under stress conditions, JNK-mediated phosphorylation of SFN and YWHAZ, releases BAX to mitochondria. Interacts with RNF144B, which regulates the ubiquitin-dependent stability of BAX. Interacts with CLU under stress conditions that cause a conformation change leading to BAX oligomerization and association with mitochondria. Does not interact with CLU in unstressed cells. Interacts with FAIM2/LFG2. Interacts with RTL10/BOP. Interacts (via a C-terminal 33 residues) with NOL3 (via CARD domain); inhibits BAX activation and translocation and consequently cytochrome c release from mitochondria. Interacts with GIMAP3/IAN4 and GIMAP5/IAN5; this interaction is increased, when cells initiate apoptosis upon IL2 withdrawal. Interacts with IRF3; the interaction is direct, increases upon Sendai virus infection and mediates the formation of the apoptosis complex TOMM70:HSP90AA1:IRF3:BAX. Interacts with MOAP1, facilitating BAX-dependent mitochondrial outer membrane permeabilization and apoptosis. Interacts with BCL2L10/BCL-B. Interacts with non-acetylated XRCC6/Ku70; this interaction leads to BAX sequestration in the cytosol, away from the mitochondria, preventing BAX-mediated apoptosis. Ubiquitinated in the absence of XRCC6/Ku70. Ubiquitinated on Lys-128 and Lys-190. 'Lys-63'-linked polyubiquitin chains on Lys-128 are removed by USP12.

The protein resides in the mitochondrion outer membrane. Its subcellular location is the cytoplasm. The protein localises to the nucleus. Functionally, plays a role in the mitochondrial apoptotic process. Under normal conditions, BAX is largely cytosolic via constant retrotranslocation from mitochondria to the cytosol mediated by BCL2L1/Bcl-xL, which avoids accumulation of toxic BAX levels at the mitochondrial outer membrane (MOM). Under stress conditions, undergoes a conformation change that causes translocation to the mitochondrion membrane, leading to the release of cytochrome c that then triggers apoptosis. Promotes activation of CASP3, and thereby apoptosis. This chain is Apoptosis regulator BAX (BAX), found in Bos taurus (Bovine).